A 540-amino-acid polypeptide reads, in one-letter code: FAD-binding monooxygenase lolF1 (540 aa).

FAD-binding positions include 43-46 and 55-58; these read VWRE and DSLF. NADP(+) contacts are provided by residues 53–55, 182–188, and 205–206; these read AVD, TGPSGVQ, and QS.

The protein belongs to the FAD-binding monooxygenase family. FAD is required as a cofactor.

The protein operates within alkaloid biosynthesis. FAD-binding monooxygenase; part of the gene cluster that mediates the biosynthesis of loline alkaloids, potent insecticidal agents composed of a pyrrolizidine ring system and an uncommon ether bridge linking carbons 2 and 7. Lolines are structurally differentiated by the various modifications of the L-amino group and include norloline, loline, N-methylloline, N-acetylloline, N-acetylnorloline, and N-formylloline. The first committed step is the condensation of O-acetyl-L-homoserine (derived from L-aspartic acid) and L-proline, probably catalyzed by the gamma-type pyridoxal 5'-phosphate(PLP)-dependent enzyme lolC, to give the diamino diacid, NACPP. Ensuing cyclization, decarboxylation, and acetylation steps yield 1-exo-acetamidopyrrolizidine (AcAP). LolO is required for installation of the ether bridge upon the pathway intermediate, 1-exo-acetamidopyrrolizidine (AcAP). In sequential 2-oxoglutarate- and O(2)-consuming steps, lolO removes hydrogens from C2 and C7 of AcAP to form both carbon-oxygen bonds in N-acetylnorloline (NANL), the precursor to all other lolines. The enzymes lolD, lolE, lolF and lolT have also been proposed to be involved in the ether-bridge installation. Further processing of the exocyclic moiety of NANL by fungal N-acetamidase (LolN), methyltransferase (LolM), and cytochrome P450 (LolP) enzymes, with occasional involvement of a plant acetyltransferase, generates the other known lolines. LolN transforms NANL to norlonine which is monomethylated and dimethylated to respectively lonine and N-methyllonine (NML) by lolM. LolP catalyzes hydroxylation of the methyl group in N-methylloline (NML) and further oxygenation to N-formylloline (NFL). A plant acetyltransferase is responsible for the acetylation of loline to form N-acetylloline (NAL). LolA might interact with aspartate kinase to prevent feedback inhibition of its activity by these end products and thereby promote production of L-homoserine from L-aspartate. This Epichloe uncinata (Endophyte fungus) protein is FAD-binding monooxygenase lolF1.